Reading from the N-terminus, the 202-residue chain is Pyridoxal 5'-phosphate synthase subunit PdxT (202 aa).

Position 52-54 (52-54) interacts with L-glutamine; sequence GES. Residue Cys-84 is the Nucleophile of the active site. Residues Arg-116 and 143 to 144 each bind L-glutamine; that span reads IR. Catalysis depends on charge relay system residues His-184 and Glu-186.

It belongs to the glutaminase PdxT/SNO family. In terms of assembly, in the presence of PdxS, forms a dodecamer of heterodimers. Only shows activity in the heterodimer.

The catalysed reaction is aldehydo-D-ribose 5-phosphate + D-glyceraldehyde 3-phosphate + L-glutamine = pyridoxal 5'-phosphate + L-glutamate + phosphate + 3 H2O + H(+). The enzyme catalyses L-glutamine + H2O = L-glutamate + NH4(+). It participates in cofactor biosynthesis; pyridoxal 5'-phosphate biosynthesis. Functionally, catalyzes the hydrolysis of glutamine to glutamate and ammonia as part of the biosynthesis of pyridoxal 5'-phosphate. The resulting ammonia molecule is channeled to the active site of PdxS. This chain is Pyridoxal 5'-phosphate synthase subunit PdxT, found in Pyrobaculum neutrophilum (strain DSM 2338 / JCM 9278 / NBRC 100436 / V24Sta) (Thermoproteus neutrophilus).